Reading from the N-terminus, the 182-residue chain is Small ribosomal subunit protein uS4c (182 aa).

Residues 13–34 (GLTSKRPRSGSDPKNQLRSGKR) are disordered. An S4 RNA-binding domain is found at 82–143 (MRLDNILFRL…KQRSKALIQN (62 aa)).

The protein belongs to the universal ribosomal protein uS4 family. As to quaternary structure, part of the 30S ribosomal subunit. Contacts protein S5. The interaction surface between S4 and S5 is involved in control of translational fidelity.

Its subcellular location is the plastid. It localises to the chloroplast. One of the primary rRNA binding proteins, it binds directly to 16S rRNA where it nucleates assembly of the body of the 30S subunit. Functionally, with S5 and S12 plays an important role in translational accuracy. This chain is Small ribosomal subunit protein uS4c (rps4), found in Iris lutescens (Crimean iris).